The chain runs to 366 residues: Chorismate synthase (366 aa).

Positions 48 and 54 each coordinate NADP(+). FMN is bound by residues 125 to 127 (RSS), 238 to 239 (NA), Gly278, 293 to 297 (KPTSS), and Arg319.

The protein belongs to the chorismate synthase family. In terms of assembly, homotetramer. The cofactor is FMNH2.

The catalysed reaction is 5-O-(1-carboxyvinyl)-3-phosphoshikimate = chorismate + phosphate. The protein operates within metabolic intermediate biosynthesis; chorismate biosynthesis; chorismate from D-erythrose 4-phosphate and phosphoenolpyruvate: step 7/7. In terms of biological role, catalyzes the anti-1,4-elimination of the C-3 phosphate and the C-6 proR hydrogen from 5-enolpyruvylshikimate-3-phosphate (EPSP) to yield chorismate, which is the branch point compound that serves as the starting substrate for the three terminal pathways of aromatic amino acid biosynthesis. This reaction introduces a second double bond into the aromatic ring system. The protein is Chorismate synthase of Cellvibrio japonicus (strain Ueda107) (Pseudomonas fluorescens subsp. cellulosa).